The sequence spans 383 residues: Small ribosomal subunit protein mS31 (383 aa).

Residues 1–21 (MLRSLCSIAVRLGGARQPRLL) constitute a mitochondrion transit peptide. The stretch at 158–187 (VNEAQIKLQEQRKALLNDVREKVEQEEVEE) forms a coiled coil.

The protein belongs to the mitochondrion-specific ribosomal protein mS31 family. In terms of assembly, component of the mitochondrial ribosome small subunit (28S) which comprises a 12S rRNA and about 30 distinct proteins.

The protein localises to the mitochondrion. The polypeptide is Small ribosomal subunit protein mS31 (mrps-31) (Caenorhabditis elegans).